The sequence spans 468 residues: Dihydrolipoyl dehydrogenase (468 aa).

Residues 39–47 (EKGNLGGVC), K56, and A119 contribute to the FAD site. An intrachain disulfide couples C47 to C52. Residues 183-187 (GGGYI), E206, and 271-274 (TVGR) contribute to the NAD(+) site. Positions 314 and 322 each coordinate FAD. The Proton acceptor role is filled by H446.

This sequence belongs to the class-I pyridine nucleotide-disulfide oxidoreductase family. Homodimer. The cofactor is FAD.

The protein resides in the cytoplasm. Its subcellular location is the membrane. The enzyme catalyses N(6)-[(R)-dihydrolipoyl]-L-lysyl-[protein] + NAD(+) = N(6)-[(R)-lipoyl]-L-lysyl-[protein] + NADH + H(+). Lipoamide dehydrogenase is a component of the alpha-ketoacid dehydrogenase complexes. In Staphylococcus aureus (strain COL), this protein is Dihydrolipoyl dehydrogenase (pdhD).